The sequence spans 205 residues: High frequency lysogenization protein HflD homolog (205 aa).

This sequence belongs to the HflD family.

The protein localises to the cytoplasm. It localises to the cell inner membrane. The protein is High frequency lysogenization protein HflD homolog of Vibrio atlanticus (strain LGP32) (Vibrio splendidus (strain Mel32)).